The chain runs to 391 residues: Ferrochelatase (391 aa).

Fe cation is bound by residues His-196 and Glu-281.

The protein belongs to the ferrochelatase family.

The protein resides in the cytoplasm. The enzyme catalyses heme b + 2 H(+) = protoporphyrin IX + Fe(2+). It functions in the pathway porphyrin-containing compound metabolism; protoheme biosynthesis; protoheme from protoporphyrin-IX: step 1/1. Its function is as follows. Catalyzes the ferrous insertion into protoporphyrin IX. The polypeptide is Ferrochelatase (Prochlorococcus marinus (strain MIT 9301)).